The primary structure comprises 134 residues: Cytochrome b (134 aa).

Transmembrane regions (helical) follow at residues F33–M53, W77–V98, and W113–L133. Positions 83 and 97 each coordinate heme b.

This sequence belongs to the cytochrome b family. The cytochrome bc1 complex contains 11 subunits: 3 respiratory subunits (MT-CYB, CYC1 and UQCRFS1), 2 core proteins (UQCRC1 and UQCRC2) and 6 low-molecular weight proteins (UQCRH/QCR6, UQCRB/QCR7, UQCRQ/QCR8, UQCR10/QCR9, UQCR11/QCR10 and a cleavage product of UQCRFS1). This cytochrome bc1 complex then forms a dimer. Requires heme b as cofactor.

The protein localises to the mitochondrion inner membrane. Functionally, component of the ubiquinol-cytochrome c reductase complex (complex III or cytochrome b-c1 complex) that is part of the mitochondrial respiratory chain. The b-c1 complex mediates electron transfer from ubiquinol to cytochrome c. Contributes to the generation of a proton gradient across the mitochondrial membrane that is then used for ATP synthesis. The chain is Cytochrome b (MT-CYB) from Chiroderma salvini (Salvin's big-eyed bat).